Consider the following 318-residue polypeptide: 2-keto-3-deoxygluconate permease (318 aa).

The next 10 helical transmembrane spans lie at 10-30, 42-62, 82-102, 109-129, 139-159, 163-183, 194-214, 224-244, 257-277, and 289-309; these read LPGGMMLVPLLLGAVCHTLWP, GLISGTVPILAVWFFCMGATI, IAMAWLVAVLCAPLLPIGGVP, LSVLALVAAMDMTNGGLYAAL, AGAVVLMSLESGPLISMLILG, LASFDPLLFVGAVLPLLLGFA, FFAQATTTLVPFFGFALGNTL, ASGVLLGVAVIVITGLPLLLA, VAASSTAGAAVATPALIAGMA, and ALVASAVIVTSLLVPLLTALY.

The protein belongs to the KdgT transporter family.

It localises to the cell inner membrane. It catalyses the reaction 2-dehydro-3-deoxy-D-gluconate(in) + H(+)(in) = 2-dehydro-3-deoxy-D-gluconate(out) + H(+)(out). In terms of biological role, catalyzes the proton-dependent uptake of 2-keto-3-deoxygluconate (KDG) into the cell. The sequence is that of 2-keto-3-deoxygluconate permease from Xanthomonas euvesicatoria pv. vesicatoria (strain 85-10) (Xanthomonas campestris pv. vesicatoria).